Here is a 384-residue protein sequence, read N- to C-terminus: Movement protein TGB1 (384 aa).

The interval 1–36 (MVQVQRRTGGDKGAKGNRASSAPVRSRRMTQDDWSR) is disordered. A (+)RNA virus helicase ATP-binding domain is found at 88–238 (GKNCDLTCNA…NYNFPIIAEC (151 aa)). 123 to 130 (GAPGVGKS) is a binding site for ATP. Residues 239 to 384 (YASRRFGKAT…CTGDTFCEDR (146 aa)) form the (+)RNA virus helicase C-terminal domain.

It belongs to the virgaviridae/benyvirus TGB1 movement protein family. As to quaternary structure, homooligomer. Interacts with movement protein TGB3.

The protein resides in the host cell junction. It localises to the host plasmodesma. Its function is as follows. Transports viral genome to neighboring plant cells directly through plasmodesmata, without any budding. The movement protein allows efficient cell to cell propagation, by bypassing the host cell wall barrier. Engages in homologous interactions leading to the formation of a ribonucleoprotein complex containing viral genomic and messenger RNAs (vRNPs). TGBp2 and TGBp3 are necessary for intracellular delivery of TGBp1-containing vRNPs to plasmodesmata. This Beet necrotic yellow vein virus (isolate Japan/S) (BNYVV) protein is Movement protein TGB1.